We begin with the raw amino-acid sequence, 579 residues long: Putative truncated flagellar export/assembly protein LfhA (579 aa).

The next 3 helical transmembrane spans lie at 86 to 106, 124 to 144, and 177 to 197; these read AIAG…IGIF, IGDG…AAII, and FVLA…SALL.

The protein belongs to the FHIPEP (flagella/HR/invasion proteins export pore) family.

The protein resides in the cell inner membrane. The sequence is that of Putative truncated flagellar export/assembly protein LfhA from Escherichia coli (strain K12).